Reading from the N-terminus, the 163-residue chain is Peptide methionine sulfoxide reductase MsrA (163 aa).

Cysteine 10 is an active-site residue.

Belongs to the MsrA Met sulfoxide reductase family.

The enzyme catalyses L-methionyl-[protein] + [thioredoxin]-disulfide + H2O = L-methionyl-(S)-S-oxide-[protein] + [thioredoxin]-dithiol. The catalysed reaction is [thioredoxin]-disulfide + L-methionine + H2O = L-methionine (S)-S-oxide + [thioredoxin]-dithiol. Functionally, has an important function as a repair enzyme for proteins that have been inactivated by oxidation. Catalyzes the reversible oxidation-reduction of methionine sulfoxide in proteins to methionine. This is Peptide methionine sulfoxide reductase MsrA from Vesicomyosocius okutanii subsp. Calyptogena okutanii (strain HA).